A 474-amino-acid polypeptide reads, in one-letter code: Poly(A) polymerase catalytic subunit (474 aa).

Active-site residues include Asp-193 and Asp-195.

Belongs to the poxviridae poly(A) polymerase catalytic subunit family. As to quaternary structure, heterodimer of a large (catalytic) subunit and a small (regulatory) subunit.

It catalyses the reaction RNA(n) + ATP = RNA(n)-3'-adenine ribonucleotide + diphosphate. Polymerase that creates the 3'-poly(A) tail of mRNA's. The sequence is that of Poly(A) polymerase catalytic subunit (PAPL) from Bos taurus (Bovine).